We begin with the raw amino-acid sequence, 335 residues long: Holliday junction branch migration complex subunit RuvB (335 aa).

Positions 4-184 (ADRIISGQAK…FGIVQRLEFY (181 aa)) are large ATPase domain (RuvB-L). ATP contacts are provided by residues Ile23, Arg24, Gly65, Lys68, Thr69, Thr70, 131-133 (EDY), Arg174, Tyr184, and Arg221. Thr69 is a Mg(2+) binding site. Residues 185–255 (SVEDLTSIVA…VAKQALSMLD (71 aa)) form a small ATPAse domain (RuvB-S) region. The segment at 258–335 (DAGFDYLDRK…RHFGLQKLSD (78 aa)) is head domain (RuvB-H). The DNA site is built by Arg294, Arg313, and Arg318.

Belongs to the RuvB family. Homohexamer. Forms an RuvA(8)-RuvB(12)-Holliday junction (HJ) complex. HJ DNA is sandwiched between 2 RuvA tetramers; dsDNA enters through RuvA and exits via RuvB. An RuvB hexamer assembles on each DNA strand where it exits the tetramer. Each RuvB hexamer is contacted by two RuvA subunits (via domain III) on 2 adjacent RuvB subunits; this complex drives branch migration. In the full resolvosome a probable DNA-RuvA(4)-RuvB(12)-RuvC(2) complex forms which resolves the HJ.

The protein resides in the cytoplasm. It carries out the reaction ATP + H2O = ADP + phosphate + H(+). Its function is as follows. The RuvA-RuvB-RuvC complex processes Holliday junction (HJ) DNA during genetic recombination and DNA repair, while the RuvA-RuvB complex plays an important role in the rescue of blocked DNA replication forks via replication fork reversal (RFR). RuvA specifically binds to HJ cruciform DNA, conferring on it an open structure. The RuvB hexamer acts as an ATP-dependent pump, pulling dsDNA into and through the RuvAB complex. RuvB forms 2 homohexamers on either side of HJ DNA bound by 1 or 2 RuvA tetramers; 4 subunits per hexamer contact DNA at a time. Coordinated motions by a converter formed by DNA-disengaged RuvB subunits stimulates ATP hydrolysis and nucleotide exchange. Immobilization of the converter enables RuvB to convert the ATP-contained energy into a lever motion, pulling 2 nucleotides of DNA out of the RuvA tetramer per ATP hydrolyzed, thus driving DNA branch migration. The RuvB motors rotate together with the DNA substrate, which together with the progressing nucleotide cycle form the mechanistic basis for DNA recombination by continuous HJ branch migration. Branch migration allows RuvC to scan DNA until it finds its consensus sequence, where it cleaves and resolves cruciform DNA. The protein is Holliday junction branch migration complex subunit RuvB of Haemophilus influenzae (strain 86-028NP).